Reading from the N-terminus, the 169-residue chain is ATP synthase subunit b (169 aa).

Residues 11–31 form a helical membrane-spanning segment; that stretch reads IPSFIAQIVNFGLLLGLLYLF.

Belongs to the ATPase B chain family. In terms of assembly, F-type ATPases have 2 components, F(1) - the catalytic core - and F(0) - the membrane proton channel. F(1) has five subunits: alpha(3), beta(3), gamma(1), delta(1), epsilon(1). F(0) has three main subunits: a(1), b(2) and c(10-14). The alpha and beta chains form an alternating ring which encloses part of the gamma chain. F(1) is attached to F(0) by a central stalk formed by the gamma and epsilon chains, while a peripheral stalk is formed by the delta and b chains.

It localises to the cell membrane. F(1)F(0) ATP synthase produces ATP from ADP in the presence of a proton or sodium gradient. F-type ATPases consist of two structural domains, F(1) containing the extramembraneous catalytic core and F(0) containing the membrane proton channel, linked together by a central stalk and a peripheral stalk. During catalysis, ATP synthesis in the catalytic domain of F(1) is coupled via a rotary mechanism of the central stalk subunits to proton translocation. In terms of biological role, component of the F(0) channel, it forms part of the peripheral stalk, linking F(1) to F(0). In Dehalococcoides mccartyi (strain ATCC BAA-2100 / JCM 16839 / KCTC 5957 / BAV1), this protein is ATP synthase subunit b.